We begin with the raw amino-acid sequence, 236 residues long: 1-(5-phosphoribosyl)-5-[(5-phosphoribosylamino)methylideneamino] imidazole-4-carboxamide isomerase (236 aa).

The active-site Proton acceptor is the Asp8. Asp127 (proton donor) is an active-site residue.

It belongs to the HisA/HisF family.

The protein resides in the cytoplasm. It carries out the reaction 1-(5-phospho-beta-D-ribosyl)-5-[(5-phospho-beta-D-ribosylamino)methylideneamino]imidazole-4-carboxamide = 5-[(5-phospho-1-deoxy-D-ribulos-1-ylimino)methylamino]-1-(5-phospho-beta-D-ribosyl)imidazole-4-carboxamide. It participates in amino-acid biosynthesis; L-histidine biosynthesis; L-histidine from 5-phospho-alpha-D-ribose 1-diphosphate: step 4/9. This Campylobacter concisus (strain 13826) protein is 1-(5-phosphoribosyl)-5-[(5-phosphoribosylamino)methylideneamino] imidazole-4-carboxamide isomerase.